The sequence spans 340 residues: Fructoselysine 6-phosphate deglycase (340 aa).

SIS domains are found at residues 35-169 and 201-331; these read IVEE…RLAP and LGEL…PDER.

In terms of assembly, homododecamer.

The enzyme catalyses N(6)-(6-phospho-D-fructosyl)-L-lysine + H2O = D-glucose 6-phosphate + L-lysine. It functions in the pathway carbohydrate metabolism; fructoselysine degradation; D-glucose 6-phosphate and lysine from fructoselysine: step 2/2. With respect to regulation, strongly inhibited by ZnCl(2). Functionally, catalyzes the reversible conversion of fructoselysine 6-phosphate to glucose 6-phosphate and lysine. Functions in a fructoselysine degradation pathway that allows E.coli to grow on fructoselysine or psicoselysine. The sequence is that of Fructoselysine 6-phosphate deglycase from Escherichia coli (strain K12).